A 402-amino-acid chain; its full sequence is Deoxyguanosinetriphosphate triphosphohydrolase-like protein (402 aa).

An HD domain is found at 69–217 (RLTHSLEVAQ…AAIADDIAYD (149 aa)).

The protein belongs to the dGTPase family. Type 2 subfamily.

The polypeptide is Deoxyguanosinetriphosphate triphosphohydrolase-like protein (Bradyrhizobium diazoefficiens (strain JCM 10833 / BCRC 13528 / IAM 13628 / NBRC 14792 / USDA 110)).